We begin with the raw amino-acid sequence, 276 residues long: Cell division protein FtsQ (276 aa).

Over 1-11 (MQYILKLKYYL) the chain is Cytoplasmic. Residues 12 to 32 (YNITWKLVFICVMLVLLIVGI) traverse the membrane as a helical segment. Residues 33 to 276 (HKNIKWVCDY…NVSKGSHDYD (244 aa)) lie on the Periplasmic side of the membrane. The 71-residue stretch at 45–115 (GPLSYIIVTG…NTLKINLIEY (71 aa)) folds into the POTRA domain.

It belongs to the FtsQ/DivIB family. FtsQ subfamily. As to quaternary structure, part of a complex composed of FtsB, FtsL and FtsQ.

The protein localises to the cell inner membrane. In terms of biological role, essential cell division protein. May link together the upstream cell division proteins, which are predominantly cytoplasmic, with the downstream cell division proteins, which are predominantly periplasmic. May control correct divisome assembly. This is Cell division protein FtsQ from Blochmanniella floridana.